Consider the following 321-residue polypeptide: Glycerol-3-phosphate dehydrogenase [NAD(P)+] (321 aa).

NADPH-binding residues include Ser-10, Phe-11, Arg-31, Arg-32, and Lys-104. Lys-104 and Gly-132 together coordinate sn-glycerol 3-phosphate. Ala-136 serves as a coordination point for NADPH. The sn-glycerol 3-phosphate site is built by Lys-186, Asp-238, Ser-248, Arg-249, and Asn-250. Residue Lys-186 is the Proton acceptor of the active site. Arg-249 is an NADPH binding site. Residue Glu-272 coordinates NADPH.

Belongs to the NAD-dependent glycerol-3-phosphate dehydrogenase family.

It localises to the cytoplasm. The catalysed reaction is sn-glycerol 3-phosphate + NAD(+) = dihydroxyacetone phosphate + NADH + H(+). The enzyme catalyses sn-glycerol 3-phosphate + NADP(+) = dihydroxyacetone phosphate + NADPH + H(+). In terms of biological role, catalyzes the reduction of the glycolytic intermediate dihydroxyacetone phosphate (DHAP) to sn-glycerol 3-phosphate (G3P). The polypeptide is Glycerol-3-phosphate dehydrogenase [NAD(P)+] (Methanothermobacter thermautotrophicus (strain ATCC 29096 / DSM 1053 / JCM 10044 / NBRC 100330 / Delta H) (Methanobacterium thermoautotrophicum)).